The chain runs to 534 residues: Ethanolamine kinase (534 aa).

Phosphoserine is present on Ser23.

It belongs to the choline/ethanolamine kinase family.

The protein localises to the cytoplasm. It catalyses the reaction ethanolamine + ATP = phosphoethanolamine + ADP + H(+). The catalysed reaction is choline + ATP = phosphocholine + ADP + H(+). It functions in the pathway phospholipid metabolism; phosphatidylethanolamine biosynthesis; phosphatidylethanolamine from ethanolamine: step 1/3. Catalyzes the committed step of phosphatidylethanolamine synthesis via the CDP-ethanolamine branch of the Kennedy pathway. Also exhibits choline kinase activity, thus contributing to phosphatidylcholine synthesis via the CDP-choline pathway, but its preferred substrate is ethanolamine. The polypeptide is Ethanolamine kinase (EKI1) (Saccharomyces cerevisiae (strain ATCC 204508 / S288c) (Baker's yeast)).